The primary structure comprises 368 residues: COP9 signalosome complex subunit 5 (368 aa).

In terms of domain architecture, MPN spans Ile-56–Gly-193. Residues His-139, His-141, and Asp-152 each contribute to the Zn(2+) site. A JAMM motif motif is present at residues His-139–Asp-152. The interval Thr-347–Ala-368 is disordered.

It belongs to the peptidase M67A family. CSN5 subfamily. Component of the CSN complex, probably composed of csn-1, csn-2, csn-3, csn-4, csn-5, csn-6 and csn-7. Within the complex it probably interacts directly with csn-1. Interacts with glh-1 and glh-3. Interacts with lag-1. Interacts with kgb-1. A divalent metal cation is required as a cofactor.

The protein resides in the cytoplasm. Its subcellular location is the nucleus. In terms of biological role, probable protease subunit of the COP9 signalosome complex (CSN), a complex involved in various cellular and developmental processes. The CSN complex is an essential regulator of the ubiquitin (Ubl) conjugation pathway by mediating the deneddylation of the cullin subunits of the SCF-type E3 ligase complexes, leading to decrease the Ubl ligase activity of SCF. In the complex, it probably acts as the catalytic center that mediates the cleavage of Nedd8 from cullins. It however has no metalloprotease activity by itself and requires the other subunits of the CSN complex. The CSN complex plays an essential role in embryogenesis and oogenesis and is required to regulate microtubule stability in the early embryo. Mediates mei-3/katanin targeting for degradation at the meiosis to mitosis transition via deneddylation of cul-3. May stabilize glh-1 protein levels by antagonizing kgb-1. This is COP9 signalosome complex subunit 5 (csn-5) from Caenorhabditis elegans.